A 255-amino-acid chain; its full sequence is Homeobox protein Hox-D4 (255 aa).

The disordered stretch occupies residues 31–127; sequence EQGADYYGGG…PKQPPSGTAL (97 aa). Residues 94–107 are compositionally biased toward pro residues; the sequence is EPCPAPPAPPPAPL. Residues 133–138 carry the Antp-type hexapeptide motif; the sequence is VYPWMK. A DNA-binding region (homeobox) is located at residues 154–213; it reads PKRSRTAYTRQQVLELEKEFHFNRYLTRRRRIEIAHTLCLSERQIKIWFQNRRMKWKKDH. The interval 212 to 255 is disordered; that stretch reads DHKLPNTKGRSSSSSSSSSCSSSVAPSQHLQPMAKDHHTDLTTL. A compositionally biased stretch (low complexity) spans 222–234; sequence SSSSSSSSSCSSS. Basic and acidic residues predominate over residues 245 to 255; sequence AKDHHTDLTTL.

The protein belongs to the Antp homeobox family. Deformed subfamily. In terms of assembly, forms a DNA-binding heterodimer with transcription factor PBX1.

It localises to the nucleus. Sequence-specific transcription factor which is part of a developmental regulatory system that provides cells with specific positional identities on the anterior-posterior axis. The chain is Homeobox protein Hox-D4 (HOXD4) from Homo sapiens (Human).